Here is a 429-residue protein sequence, read N- to C-terminus: Bifunctional protein GlmU (429 aa).

The pyrophosphorylase stretch occupies residues 1–223; the sequence is MKTSILILAA…EDEFMGINDK (223 aa). UDP-N-acetyl-alpha-D-glucosamine is bound by residues 8-11, K22, and 81-82; these read LAAG and GT. D102 contacts Mg(2+). The UDP-N-acetyl-alpha-D-glucosamine site is built by G135, E149, N164, and N221. A Mg(2+)-binding site is contributed by N221. The segment at 224 to 244 is linker; that stretch reads FELSIAENFMQEKIKKYWMQQ. Positions 245-429 are N-acetyltransferase; it reads GVIFHLPQST…KDYYYKKFQK (185 aa). The UDP-N-acetyl-alpha-D-glucosamine site is built by R308 and K325. The Proton acceptor role is filled by H336. Y339 and N350 together coordinate UDP-N-acetyl-alpha-D-glucosamine. Acetyl-CoA-binding positions include 359 to 360, S378, A396, and R413; that span reads NY.

It in the N-terminal section; belongs to the N-acetylglucosamine-1-phosphate uridyltransferase family. This sequence in the C-terminal section; belongs to the transferase hexapeptide repeat family. In terms of assembly, homotrimer. The cofactor is Mg(2+).

The protein localises to the cytoplasm. It carries out the reaction alpha-D-glucosamine 1-phosphate + acetyl-CoA = N-acetyl-alpha-D-glucosamine 1-phosphate + CoA + H(+). The enzyme catalyses N-acetyl-alpha-D-glucosamine 1-phosphate + UTP + H(+) = UDP-N-acetyl-alpha-D-glucosamine + diphosphate. The protein operates within nucleotide-sugar biosynthesis; UDP-N-acetyl-alpha-D-glucosamine biosynthesis; N-acetyl-alpha-D-glucosamine 1-phosphate from alpha-D-glucosamine 6-phosphate (route II): step 2/2. It functions in the pathway nucleotide-sugar biosynthesis; UDP-N-acetyl-alpha-D-glucosamine biosynthesis; UDP-N-acetyl-alpha-D-glucosamine from N-acetyl-alpha-D-glucosamine 1-phosphate: step 1/1. It participates in bacterial outer membrane biogenesis; LPS lipid A biosynthesis. Functionally, catalyzes the last two sequential reactions in the de novo biosynthetic pathway for UDP-N-acetylglucosamine (UDP-GlcNAc). The C-terminal domain catalyzes the transfer of acetyl group from acetyl coenzyme A to glucosamine-1-phosphate (GlcN-1-P) to produce N-acetylglucosamine-1-phosphate (GlcNAc-1-P), which is converted into UDP-GlcNAc by the transfer of uridine 5-monophosphate (from uridine 5-triphosphate), a reaction catalyzed by the N-terminal domain. This chain is Bifunctional protein GlmU, found in Campylobacter jejuni (strain RM1221).